The chain runs to 1037 residues: MTVANTETHSAAKPSSTIGPWKLGETLGFGSTGKVQLAQHERTGHRTAVKVISKSIFNNNGNHSNDDSVLPYNIEREIVIMKLLSHPNVLSLYDVWETNNNLYLILEYAEKGELFNLLVDHGPLPEREAINCFRQIIIGISYCHALGIVHRDLKPENLLLDSFYNIKIADFGMAALQTDADLLETSCGSPHYAAPEIVSGLPYEGFASDVWSCGVILFALLTGRLPFDEENGNVRDLLLKVQKGQFEMPNDTEISRDAQDLIGKILVVDPRQRIKIRDILSHPLLKKYQTIKDSKSIKDLPRENTYLYPLADSNNHTSASIDDSILQNLVVLWHGRHADDIVSKLKENGTNKEKILYALLYRFKLDSVRGSNKKNRNKIKKTKKNKRSSTLSSSSSLLLNNRSIQSTPRRRTSKRHSREFSSSRKRSSFLLSSNPTDSSPIPLRSSKRITHINVASANTQATPSGVPNPHKRNSKKRSSKRLSYMPNTKRSSLTSKSLSNFTNLIDDDDWEYIEKDAKRTSSNFATLIDEIFEPEKFELAKREKAELQRKVQEAKRQSVNAQKINEDEFGSEVSDGMKELKKINDKVSSPLINYEFSQQELLQDIDTLLTNRYQLSSYTRPISRLDPGLTPVTETLPNNLKEKTALLQDTEKKIIETIRRSKFLGSLLNVRGGLSPGKSELAPIEESPIVSTTPLIYNDRMEPRRISDVEVPHFTRKSKHFTTANNRRSVLSLYAKDSIKDLNEFLIKEDPDLPPQGSTDNESRSEDPEIAESITDSRNIQYDEDDSKDGDNVNNDNILSDFPQGVGISQEYDMKDKNPNQSPISKSAEPTLVVKLPSLSSFQGKNASGLGLYQREPSKVTLPSLTSNNSSVGENIEDGAEKGTESEKIAASLSDDDLKEDNDKKDNDTVNAPTTVKKPPNSVLLKKFSKGKILELEIHAKIPEKRLYEGLHKLLEGWKQYGLKNLVFNITNMIITGKLVNDSILFLRSTLFEIMVLPNGDGRSLIKFNKKTGSTKTLTKLATEIQIILQKEGVLDK.

Residues Trp21–Leu285 enclose the Protein kinase domain. ATP-binding positions include Leu27–Val35 and Lys50. The active-site Proton acceptor is the Asp152. Residues Asn372–Arg387 show a composition bias toward basic residues. Residues Asn372 to Thr494 are disordered. Over residues Ser388 to Ile404 the composition is skewed to low complexity. Ser396 is modified (phosphoserine). The segment covering Pro408–Ser427 has biased composition (basic residues). Residues Asn453–Gly465 are compositionally biased toward polar residues. Residues Pro469 to Lys480 are compositionally biased toward basic residues. A compositionally biased stretch (low complexity) spans Arg481–Thr494. A phosphoserine mark is found at Ser675, Ser707, Ser777, Ser822, Ser825, and Ser871. Disordered regions lie at residues Leu746–Gln804, Gln810–Glu829, and Thr861–Lys918. Positions Thr861 to Gly873 are enriched in polar residues. The segment covering Gly879–Lys888 has biased composition (basic and acidic residues).

Belongs to the protein kinase superfamily. CAMK Ser/Thr protein kinase family. NIM1 subfamily. Interacts with septin proteins, primarily with CDC11. Interacts with SWE1 and NAP1.

The protein resides in the bud neck. The enzyme catalyses L-seryl-[protein] + ATP = O-phospho-L-seryl-[protein] + ADP + H(+). It catalyses the reaction L-threonyl-[protein] + ATP = O-phospho-L-threonyl-[protein] + ADP + H(+). In terms of biological role, involved in regulation of bud growth during cell cycle and in septin organization. Plays a role in cell wall synthesis. In Saccharomyces cerevisiae (strain ATCC 204508 / S288c) (Baker's yeast), this protein is Probable serine/threonine-protein kinase KCC4 (KCC4).